We begin with the raw amino-acid sequence, 203 residues long: Outer-membrane lipoprotein LolB (203 aa).

Residues 1–18 (MTLRSFLILLLSSIVLAG) form the signal peptide. Cys-19 carries N-palmitoyl cysteine lipidation. A lipid anchor (S-diacylglycerol cysteine) is attached at Cys-19.

It belongs to the LolB family. In terms of assembly, monomer.

The protein resides in the cell outer membrane. Its function is as follows. Plays a critical role in the incorporation of lipoproteins in the outer membrane after they are released by the LolA protein. In Vibrio campbellii (strain ATCC BAA-1116), this protein is Outer-membrane lipoprotein LolB.